The following is a 138-amino-acid chain: MLQPKRTKFRKPHKVSYEGKAKGNKQVDFGEFGLMALEGAWIDARQIESARIAISKRLLKTGKMWIRIFPHMSLTKKPLEVRMGSGKGSPEKWVAVVKAGTVMFEIANVSEELMREALRAAGNKLPIKVKIVKKGEAN.

It belongs to the universal ribosomal protein uL16 family. In terms of assembly, part of the 50S ribosomal subunit.

Binds 23S rRNA and is also seen to make contacts with the A and possibly P site tRNAs. This Ureaplasma urealyticum serovar 10 (strain ATCC 33699 / Western) protein is Large ribosomal subunit protein uL16.